The chain runs to 258 residues: Octanoyltransferase (258 aa).

Residues 42 to 226 (NLGADTLLLL…AVVAALDGAL (185 aa)) form the BPL/LPL catalytic domain. Substrate contacts are provided by residues 80–87 (RGGKITWH), 156–158 (AIG), and 169–171 (GFS). The active-site Acyl-thioester intermediate is the Cys-187.

It belongs to the LipB family.

The protein resides in the cytoplasm. The enzyme catalyses octanoyl-[ACP] + L-lysyl-[protein] = N(6)-octanoyl-L-lysyl-[protein] + holo-[ACP] + H(+). It functions in the pathway protein modification; protein lipoylation via endogenous pathway; protein N(6)-(lipoyl)lysine from octanoyl-[acyl-carrier-protein]: step 1/2. Its function is as follows. Catalyzes the transfer of endogenously produced octanoic acid from octanoyl-acyl-carrier-protein onto the lipoyl domains of lipoate-dependent enzymes. Lipoyl-ACP can also act as a substrate although octanoyl-ACP is likely to be the physiological substrate. The chain is Octanoyltransferase from Rhodococcus opacus (strain B4).